Reading from the N-terminus, the 166-residue chain is NADH-quinone oxidoreductase subunit C (166 aa).

Belongs to the complex I 30 kDa subunit family. As to quaternary structure, NDH-1 is composed of 14 different subunits. Subunits NuoB, C, D, E, F, and G constitute the peripheral sector of the complex.

It is found in the cell inner membrane. It carries out the reaction a quinone + NADH + 5 H(+)(in) = a quinol + NAD(+) + 4 H(+)(out). In terms of biological role, NDH-1 shuttles electrons from NADH, via FMN and iron-sulfur (Fe-S) centers, to quinones in the respiratory chain. The immediate electron acceptor for the enzyme in this species is believed to be a menaquinone. Couples the redox reaction to proton translocation (for every two electrons transferred, four hydrogen ions are translocated across the cytoplasmic membrane), and thus conserves the redox energy in a proton gradient. The protein is NADH-quinone oxidoreductase subunit C of Chlorobium phaeobacteroides (strain DSM 266 / SMG 266 / 2430).